We begin with the raw amino-acid sequence, 75 residues long: Acyl carrier protein (75 aa).

In terms of domain architecture, Carrier spans 1-75; sequence MSVFDKVKSI…DAVNYIKENQ (75 aa). Serine 35 is modified (O-(pantetheine 4'-phosphoryl)serine).

This sequence belongs to the acyl carrier protein (ACP) family. In terms of processing, 4'-phosphopantetheine is transferred from CoA to a specific serine of apo-ACP by AcpS. This modification is essential for activity because fatty acids are bound in thioester linkage to the sulfhydryl of the prosthetic group.

Its subcellular location is the cytoplasm. It functions in the pathway lipid metabolism; fatty acid biosynthesis. Its function is as follows. Carrier of the growing fatty acid chain in fatty acid biosynthesis. The polypeptide is Acyl carrier protein (Desulfitobacterium hafniense (strain Y51)).